The following is a 447-amino-acid chain: Monocarboxylate transporter 11 (447 aa).

The Cytoplasmic segment spans residues Met-1–Gly-11. Transmembrane regions (helical) follow at residues Gly-12–Leu-32, Ala-54–Leu-74, Ala-80–Phe-100, Leu-107–Leu-127, Val-139–Ala-159, Phe-162–His-182, Ala-219–Val-239, Gly-249–Ala-269, Leu-288–Val-308, Gly-330–Val-350, Gly-354–Leu-374, and Ala-383–Pro-403. The Cytoplasmic segment spans residues Arg-404–Cys-447.

The protein belongs to the major facilitator superfamily. Monocarboxylate porter (TC 2.A.1.13) family. In terms of assembly, interacts with isoform 2 of BSG.

The protein resides in the endoplasmic reticulum membrane. The protein localises to the cell membrane. The catalysed reaction is pyruvate(out) + H(+)(out) = pyruvate(in) + H(+)(in). Proton-linked monocarboxylate transporter. It catalyzes the transport of pyruvate across the plasma membrane. Probably involved in hepatic lipid metabolism: overexpression results in an increase of triacylglycerol(TAG) levels, small increases in intracellular diacylglycerols and decreases in lysophosphatidylcholine, cholesterol ester and sphingomyelin lipids. The chain is Monocarboxylate transporter 11 (Slc16a11) from Mus musculus (Mouse).